We begin with the raw amino-acid sequence, 353 residues long: 4-hydroxy-3-methylbut-2-en-1-yl diphosphate synthase (flavodoxin) (353 aa).

[4Fe-4S] cluster contacts are provided by cysteine 265, cysteine 268, cysteine 300, and glutamate 307.

It belongs to the IspG family. The cofactor is [4Fe-4S] cluster.

It catalyses the reaction (2E)-4-hydroxy-3-methylbut-2-enyl diphosphate + oxidized [flavodoxin] + H2O + 2 H(+) = 2-C-methyl-D-erythritol 2,4-cyclic diphosphate + reduced [flavodoxin]. It functions in the pathway isoprenoid biosynthesis; isopentenyl diphosphate biosynthesis via DXP pathway; isopentenyl diphosphate from 1-deoxy-D-xylulose 5-phosphate: step 5/6. Its function is as follows. Converts 2C-methyl-D-erythritol 2,4-cyclodiphosphate (ME-2,4cPP) into 1-hydroxy-2-methyl-2-(E)-butenyl 4-diphosphate. In Sulfurihydrogenibium sp. (strain YO3AOP1), this protein is 4-hydroxy-3-methylbut-2-en-1-yl diphosphate synthase (flavodoxin).